A 192-amino-acid polypeptide reads, in one-letter code: Probable chorismate pyruvate-lyase (192 aa).

Substrate contacts are provided by R85, L120, and E176.

Belongs to the UbiC family.

The protein localises to the cytoplasm. The enzyme catalyses chorismate = 4-hydroxybenzoate + pyruvate. The protein operates within cofactor biosynthesis; ubiquinone biosynthesis. In terms of biological role, removes the pyruvyl group from chorismate, with concomitant aromatization of the ring, to provide 4-hydroxybenzoate (4HB) for the ubiquinone pathway. The sequence is that of Probable chorismate pyruvate-lyase from Pseudoalteromonas atlantica (strain T6c / ATCC BAA-1087).